We begin with the raw amino-acid sequence, 1209 residues long: Phospholipid-transporting ATPase ID (1209 aa).

Positions 1-12 (MTVPKEMPEKWA) are enriched in basic and acidic residues. Residues 1 to 36 (MTVPKEMPEKWARAQAPPSWSRKKPSWGTEEERRAR) form a disordered region. Topologically, residues 1–64 (MTVPKEMPEK…TSKYNILTFL (64 aa)) are cytoplasmic. A helical membrane pass occupies residues 65–86 (PVNLFEQFQEVANTYFLFLLIL). Residues 87 to 92 (QLIPQI) lie on the Exoplasmic loop side of the membrane. Residues 93 to 112 (SSLSWFTTIVPLVLVLTITA) traverse the membrane as a helical segment. Residues 113 to 295 (VKDATDDYFR…TSIDRLMNTL (183 aa)) lie on the Cytoplasmic side of the membrane. The chain crosses the membrane as a helical span at residues 296-317 (VLWIFGFLVCMGVILAIGNAIW). Residues 318-346 (EHEVGMRFQVYLPWDEAVDSAFFSGFLSF) are Exoplasmic loop-facing. The chain crosses the membrane as a helical span at residues 347–368 (WSYIIILNTVVPISLYVSVEVI). Residues 369–889 (RLGHSYFINW…GRWSYLRMCK (521 aa)) lie on the Cytoplasmic side of the membrane. Residue Asp411 is the 4-aspartylphosphate intermediate of the active site. The ATP site is built by Asp411, Lys412, Thr413, Glu515, Phe556, Lys579, Arg613, Thr693, Gly694, Asp695, Arg807, and Lys813. Asp411 serves as a coordination point for Mg(2+). A Mg(2+)-binding site is contributed by Thr413. Mg(2+) is bound at residue Asp833. The ATP site is built by Asn836 and Asp837. Residue Asp837 coordinates Mg(2+). A helical transmembrane segment spans residues 890 to 910 (FLCYFFYKNFAFTMVHFWFGF). The Exoplasmic loop portion of the chain corresponds to 911–922 (FCGFSAQTVYDQ). A helical membrane pass occupies residues 923 to 942 (YFITLYNIVYTSLPVLAMGV). Residues 943-972 (FDQDVPEQRSMEYPKLYEPGQLNLLFNKRE) are Cytoplasmic-facing. A helical membrane pass occupies residues 973-994 (FFICIAQGIYTSVLMFFIPYGV). Residues 995–1008 (FADATRDDGTQLAD) lie on the Exoplasmic loop side of the membrane. A helical membrane pass occupies residues 1009–1031 (YQSFAVTVATSLVIVVSVQIGLD). Residues 1032-1037 (TGYWTA) are Cytoplasmic-facing. Residues 1038 to 1058 (INHFFIWGSLAVYFAILFAMH) form a helical membrane-spanning segment. At 1059–1078 (SNGLFDMFPNQFRFVGNAQN) the chain is on the exoplasmic loop side. The chain crosses the membrane as a helical span at residues 1079 to 1103 (TLAQPTVWLTIVLTTVVCIMPVVAF). The Cytoplasmic portion of the chain corresponds to 1104 to 1209 (RFLRLNLKPD…SGGADKPLKG (106 aa)). Position 1175 is a phosphoserine (Ser1175). Residues 1181 to 1209 (SSSWIESLRRKKSDSASSPSGGADKPLKG) are disordered. A compositionally biased stretch (low complexity) spans 1195–1209 (SASSPSGGADKPLKG).

The protein belongs to the cation transport ATPase (P-type) (TC 3.A.3) family. Type IV subfamily. Component of a P4-ATPase flippase complex which consists of a catalytic alpha subunit ATP8B2 and an accessory beta subunit TMEM30A or TMEM30B. Requires Mg(2+) as cofactor. As to expression, isoform 3 is ubiquitous, with highest expression in aorta, cerebellum and uterus.

The protein resides in the cell membrane. Its subcellular location is the endoplasmic reticulum membrane. It carries out the reaction ATP + H2O + phospholipidSide 1 = ADP + phosphate + phospholipidSide 2.. The catalysed reaction is a 1,2-diacyl-sn-glycero-3-phosphocholine(out) + ATP + H2O = a 1,2-diacyl-sn-glycero-3-phosphocholine(in) + ADP + phosphate + H(+). Catalytic component of P4-ATPase flippase complex, which catalyzes the hydrolysis of ATP coupled to the transport of phosphatidylcholine (PC) from the outer to the inner leaflet of the plasma membrane. May contribute to the maintenance of membrane lipid asymmetry. The protein is Phospholipid-transporting ATPase ID of Homo sapiens (Human).